Here is an 801-residue protein sequence, read N- to C-terminus: Fibroblast growth factor receptor 3 (801 aa).

Residues 1 to 20 (MVVPACVLVFCVAVVAGATS) form the signal peptide. Residues 21–369 (EPPGPEQRVV…TDEAGSVYAG (349 aa)) lie on the Extracellular side of the membrane. Residues 22 to 124 (PPGPEQRVVR…VLCHFSVRVT (103 aa)) enclose the Ig-like C2-type 1 domain. Residues Cys-59 and Cys-107 are joined by a disulfide bond. An N-linked (GlcNAc...) asparagine glycan is attached at Asn-96. A disordered region spans residues 125-146 (DAPSSGDDEDGEDVAEDTGAPY). Acidic residues predominate over residues 130–140 (GDDEDGEDVAE). 2 consecutive Ig-like C2-type domains span residues 145 to 238 (PYWT…YTLD) and 247 to 349 (PILQ…AWLV). Cys-170 and Cys-222 are oxidised to a cystine. N-linked (GlcNAc...) asparagine glycosylation is found at Asn-219, Asn-256, Asn-288, Asn-309, and Asn-322. Cysteines 269 and 333 form a disulfide. The chain crosses the membrane as a helical span at residues 370–390 (VLSYGVVFFLFILVVAAVILC). Residues 391-801 (RLRSPPKKGL…GPPSNGGPRT (411 aa)) are Cytoplasmic-facing. Ser-438 and Ser-439 each carry phosphoserine. The region spanning 466–756 (LTLGKPLGEG…LTVTSTDEYL (291 aa)) is the Protein kinase domain. Residues 472–480 (LGEGCFGQV) and Lys-502 each bind ATP. The Proton acceptor role is filled by Asp-611. Phosphotyrosine; by autocatalysis occurs at positions 641, 642, 719, and 755. A disordered region spans residues 762–801 (FEQYSPGGQDTPSSSSSGDDSVFTHDLLPPGPPSNGGPRT). Low complexity predominate over residues 766–782 (SPGGQDTPSSSSSGDDS). Residues 790–801 (PPGPPSNGGPRT) are compositionally biased toward pro residues.

This sequence belongs to the protein kinase superfamily. Tyr protein kinase family. Fibroblast growth factor receptor subfamily. As to quaternary structure, monomer. Homodimer after ligand binding. Interacts with FGF1, FGF2, FGF4, FGF6; FGF8, FGF9, FGF10, FGF17, FGF18, FGF19, FGF20 and FGF23 (in vitro). Interacts with KLB. Affinity for fibroblast growth factors (FGFs) is increased by heparan sulfate glycosaminoglycans that function as coreceptors. Likewise, KLB increases the affinity for FGF19 and FGF21. Interacts with PIK3R1, PLCG1, SOCS1 and SOCS3. Autophosphorylated. Binding of FGF family members together with heparan sulfate proteoglycan or heparin promotes receptor dimerization and autophosphorylation on tyrosine residues. Autophosphorylation occurs in trans between the two FGFR molecules present in the dimer. Phosphorylation at Tyr-719 is essential for stimulation of cell proliferation and activation of PIK3R1, STAT1 and MAP kinase signaling. Phosphorylation at Tyr-755 is required for interaction with PIK3R1 and PLCG1. In terms of processing, ubiquitinated. Is rapidly ubiquitinated after ligand binding and autophosphorylation, leading to receptor internalization and degradation. Subject to both proteasomal and lysosomal degradation. Post-translationally, N-glycosylated in the endoplasmic reticulum. The N-glycan chains undergo further maturation to an Endo H-resistant form in the Golgi apparatus. As to expression, in embryo, expressed in heart, lung, kidney, skin, head and liver but not in muscle. In adult, highest levels in brain. Also expressed in liver, lung, kidney, testis, ovary and uterus. Very low levels in heart, thymus, spleen and muscle.

It is found in the cell membrane. The protein resides in the cytoplasmic vesicle. It localises to the endoplasmic reticulum. The catalysed reaction is L-tyrosyl-[protein] + ATP = O-phospho-L-tyrosyl-[protein] + ADP + H(+). Its activity is regulated as follows. Present in an inactive conformation in the absence of bound ligand. Ligand binding leads to dimerization and activation by autophosphorylation on tyrosine residues. Its function is as follows. Tyrosine-protein kinase that acts as a cell-surface receptor for fibroblast growth factors and plays an essential role in the regulation of cell proliferation, differentiation and apoptosis. Plays an essential role in the regulation of chondrocyte differentiation, proliferation and apoptosis, and is required for normal skeleton development. Regulates both osteogenesis and postnatal bone mineralization by osteoblasts. Promotes apoptosis in chondrocytes, but can also promote cancer cell proliferation. Required for normal development of the inner ear. Phosphorylates PLCG1, CBL and FRS2. Ligand binding leads to the activation of several signaling cascades. Activation of PLCG1 leads to the production of the cellular signaling molecules diacylglycerol and inositol 1,4,5-trisphosphate. Phosphorylation of FRS2 triggers recruitment of GRB2, GAB1, PIK3R1 and SOS1, and mediates activation of RAS, MAPK1/ERK2, MAPK3/ERK1 and the MAP kinase signaling pathway, as well as of the AKT1 signaling pathway. Plays a role in the regulation of vitamin D metabolism. Mutations that lead to constitutive kinase activation or impair normal FGFR3 maturation, internalization and degradation lead to aberrant signaling. Over-expressed or constitutively activated FGFR3 promotes activation of STAT1, STAT5A and STAT5B. Plays a role in postnatal lung development. The protein is Fibroblast growth factor receptor 3 (Fgfr3) of Mus musculus (Mouse).